The chain runs to 304 residues: UDP-N-acetylenolpyruvoylglucosamine reductase (304 aa).

One can recognise an FAD-binding PCMH-type domain in the interval 31–196 (KVGGPADYLA…ISAKFNLKPG (166 aa)). Arg-175 is an active-site residue. Residue Ser-225 is the Proton donor of the active site. Residue Glu-295 is part of the active site.

The protein belongs to the MurB family. FAD serves as cofactor.

The protein localises to the cytoplasm. The enzyme catalyses UDP-N-acetyl-alpha-D-muramate + NADP(+) = UDP-N-acetyl-3-O-(1-carboxyvinyl)-alpha-D-glucosamine + NADPH + H(+). The protein operates within cell wall biogenesis; peptidoglycan biosynthesis. Its function is as follows. Cell wall formation. This is UDP-N-acetylenolpyruvoylglucosamine reductase from Streptococcus thermophilus (strain ATCC BAA-491 / LMD-9).